Here is a 354-residue protein sequence, read N- to C-terminus: NAD-dependent epimerase/dehydratase ALT6 (354 aa).

Lys-41 and Tyr-174 together coordinate NADP(+).

This sequence belongs to the NAD(P)-dependent epimerase/dehydratase family. Dihydroflavonol-4-reductase subfamily.

The protein operates within mycotoxin biosynthesis. Its function is as follows. NAD-dependent epimerase/dehydratase; part of the gene cluster that mediates the biosynthesis of the host-selective toxins (HSTs) AAL-toxins, sphinganine-analog mycotoxins responsible for Alternaria stem canker on tomato by the tomato pathotype. The biosynthesis starts with the polyketide synthase ALT1-catalyzed C-16 carbon chain assembly from one starter acetyl-CoA unit with malonyl-CoA extender units. ALT1 also selectively transfers methyl groups at the first and the third cycle of chain elongation for AAL toxin. The C-16 polyketide chain is released from the enzyme by a nucleophilic attack of a carbanion, which is derived from R-carbon of glycin by decarboxylation, on the carbonyl carbon of polyketide acyl chain. This step is probably catalyzed by a pyridoxal 5'-phosphate-dependent aminoacyl transferase ALT4. The respective functions of the other enzymes encoded by the cluster have still to be elucidated. The sphingosine N-acyltransferase-like protein ALT7 seems not to act as a resistance/self-tolerance factor against the toxin in the toxin biosynthetic gene cluster, contrary to what is expected. The polypeptide is NAD-dependent epimerase/dehydratase ALT6 (Alternaria alternata (Alternaria rot fungus)).